The chain runs to 112 residues: Serum amyloid A protein (112 aa).

Q1 bears the Pyrrolidone carboxylic acid mark. A compositionally biased stretch (basic and acidic residues) spans 75-86; that stretch reads MTRDQVREDTKA. A disordered region spans residues 75-112; that stretch reads MTRDQVREDTKADQFANEWGRSGKDPNHFRPPGLPDKY.

This sequence belongs to the SAA family. As to expression, expressed by the liver; secreted in plasma.

The protein resides in the secreted. Its function is as follows. Major acute phase reactant. Apolipoprotein of the HDL complex. This Ovis aries (Sheep) protein is Serum amyloid A protein (SAA1).